Here is a 327-residue protein sequence, read N- to C-terminus: Methionyl-tRNA formyltransferase (327 aa).

122-125 (SLLP) contacts (6S)-5,6,7,8-tetrahydrofolate.

Belongs to the Fmt family.

The enzyme catalyses L-methionyl-tRNA(fMet) + (6R)-10-formyltetrahydrofolate = N-formyl-L-methionyl-tRNA(fMet) + (6S)-5,6,7,8-tetrahydrofolate + H(+). Attaches a formyl group to the free amino group of methionyl-tRNA(fMet). The formyl group appears to play a dual role in the initiator identity of N-formylmethionyl-tRNA by promoting its recognition by IF2 and preventing the misappropriation of this tRNA by the elongation apparatus. The sequence is that of Methionyl-tRNA formyltransferase from Ralstonia pickettii (strain 12J).